A 149-amino-acid chain; its full sequence is Ribosomal RNA large subunit methyltransferase H (149 aa).

S-adenosyl-L-methionine-binding positions include Leu71, Gly98, and 117–122 (LSKMTL).

This sequence belongs to the RNA methyltransferase RlmH family. In terms of assembly, homodimer.

It localises to the cytoplasm. The catalysed reaction is pseudouridine(1915) in 23S rRNA + S-adenosyl-L-methionine = N(3)-methylpseudouridine(1915) in 23S rRNA + S-adenosyl-L-homocysteine + H(+). In terms of biological role, specifically methylates the pseudouridine at position 1915 (m3Psi1915) in 23S rRNA. The chain is Ribosomal RNA large subunit methyltransferase H from Campylobacter fetus subsp. fetus (strain 82-40).